The sequence spans 235 residues: Phosphoribosylaminoimidazole-succinocarboxamide synthase (235 aa).

This sequence belongs to the SAICAR synthetase family.

It carries out the reaction 5-amino-1-(5-phospho-D-ribosyl)imidazole-4-carboxylate + L-aspartate + ATP = (2S)-2-[5-amino-1-(5-phospho-beta-D-ribosyl)imidazole-4-carboxamido]succinate + ADP + phosphate + 2 H(+). The protein operates within purine metabolism; IMP biosynthesis via de novo pathway; 5-amino-1-(5-phospho-D-ribosyl)imidazole-4-carboxamide from 5-amino-1-(5-phospho-D-ribosyl)imidazole-4-carboxylate: step 1/2. The chain is Phosphoribosylaminoimidazole-succinocarboxamide synthase from Streptococcus thermophilus (strain ATCC BAA-250 / LMG 18311).